A 165-amino-acid polypeptide reads, in one-letter code: MATNFFIQPITQEAEAYYPPSVITNKRKDLGVDVYCCSDLVLQPGLNIVRLHIKVACEHMGKKCGFKIMARSSMCTHERLLILANGIGLIDPGYVGELMLKIINLGDTPVQIWAKECLVQLVAQGDHVPDHINILKRNQIFPLFAPTPRGEGRFGSTGEAGIMRT.

This sequence belongs to the dUTPase family. Homotrimer. Mg(2+) is required as a cofactor.

The protein resides in the host cytoplasm. It is found in the virion. The catalysed reaction is dUTP + H2O = dUMP + diphosphate + H(+). Functionally, the viral dUTPase may play a role in lowering the dUTP concentration in natural infections to minimize misincorporation of deoxyuridine into the viral DNA and ensure the fidelity of genome replication. The protein is Deoxyuridine 5'-triphosphate nucleotidohydrolase of Ornithodoros (relapsing fever ticks).